The primary structure comprises 139 residues: Putative nickel-responsive regulator (139 aa).

The Ni(2+) site is built by His-79, His-90, His-92, and Cys-98.

The protein belongs to the transcriptional regulatory CopG/NikR family. Ni(2+) is required as a cofactor.

In terms of biological role, transcriptional regulator. The chain is Putative nickel-responsive regulator from Anaeromyxobacter dehalogenans (strain 2CP-C).